Here is a 384-residue protein sequence, read N- to C-terminus: 8-amino-7-oxononanoate synthase (384 aa).

R21 contributes to the substrate binding site. 108–109 (GF) serves as a coordination point for pyridoxal 5'-phosphate. H133 contacts substrate. Pyridoxal 5'-phosphate is bound by residues S179, H207, and T233. At K236 the chain carries N6-(pyridoxal phosphate)lysine. T352 contributes to the substrate binding site.

The protein belongs to the class-II pyridoxal-phosphate-dependent aminotransferase family. BioF subfamily. As to quaternary structure, homodimer. Requires pyridoxal 5'-phosphate as cofactor.

The catalysed reaction is 6-carboxyhexanoyl-[ACP] + L-alanine + H(+) = (8S)-8-amino-7-oxononanoate + holo-[ACP] + CO2. It functions in the pathway cofactor biosynthesis; biotin biosynthesis. Catalyzes the decarboxylative condensation of pimeloyl-[acyl-carrier protein] and L-alanine to produce 8-amino-7-oxononanoate (AON), [acyl-carrier protein], and carbon dioxide. The protein is 8-amino-7-oxononanoate synthase of Escherichia coli O7:K1 (strain IAI39 / ExPEC).